The sequence spans 4776 residues: Pneumococcal serine-rich repeat protein (4776 aa).

The N-terminal stretch at 1–72 is a signal peptide; sequence MTETVEDKVS…VVLGTISTSN (72 aa). O-linked (GlcNAc...) serine glycans are attached at residues S73, S75, S76, S78, S80, S82, S94, S100, S108, S110, S118, S120, and S121. The segment at 73–121 is serine-rich repeat region 1, SRR1; it reads SASSTSLSASESASTSASESASTSASTSASTSASESASTSASTSISASS. A disordered region spans residues 86-112; it reads STSASESASTSASTSASTSASESASTS. Residues 122 to 166 are self aggregating domain; it reads TVVGSQTAAATEATAKKVEEDRKKPASDYVASVTNVNLQSYAKRR. Residues 122-394 form a basic region, BR region; that stretch reads TVVGSQTAAA…QSKSLSVSAS (273 aa). Positions 164-168 match the Host furin cleavage recognition motif; the sequence is KRRKR. Residues 273–341 are keratin 10-binding domain, cell-type specific binding to lung-derived cells; that stretch reads TQTMLTLGSD…GYGLTSSWTV (69 aa). The tract at residues 395-4712 is serine-rich repeat region 2, SRR2; sequence QSASASASTS…ASTSASASAS (4318 aa). Disordered regions lie at residues 481-627, 861-889, 925-965, 1052-1085, 1123-1153, 1171-1199, 1311-1357, 1671-1731, 1792-1863, 2105-2133, 2169-2209, 2296-2329, 2367-2397, 2415-2443, 2571-2631, 2737-2805, 2855-3113, 3347-3375, 3411-3451, 3538-3571, 3609-3639, 3657-3685, 3797-3843, 4167-4197, 4215-4243, 4355-4401, and 4706-4747; these read ASTS…STSA, ASASTSASESASTSASASASTSASESAST, ASAS…SASA, SASTSASESASTSASASASTSASESASTSASASA, ASASTSASESASTSTSASASTSASESASTSA, ASASTSASASASTSASASTSASESASTSA, ASES…SAST, ASES…SESA, SASE…STSA, ESAS…STSA, ASAS…STSA, and SASA…GTES. Positions 4715–4747 are enriched in polar residues; that stretch reads VSNSANHSNSQVGNTSGSTGKSQKELPNTGTES. The LPXTG sorting signal motif lies at 4740-4744; sequence LPNTG. Position 4743 is a pentaglycyl murein peptidoglycan amidated threonine (T4743). Residues 4744–4776 constitute a propeptide, removed by sortase; sequence GTESSIGSVLLGVLAAVTGIGLVAKRRKRDEEE.

It belongs to the serine-rich repeat protein (SRRP) family. As to quaternary structure, binds to human and mouse protein keratin 10 (KRT10). In terms of processing, glycosylated. Only truncated substrates greater than 25 residues long are glycosylated by the Gtf1-Gtf2 complex in vitro; only Ser residues have been seen to be glycosylated. Based on electrophoretic mobility it is probable that most of the Ser residues in SSR1 and SSR2 are O-GlcNAcylated. Subsequent glycosylation by up to 7 sugar transferases (Gtf3 and GlyAT, GlyB, GlyD, GlyE, GlyF and GlyG) is able to generate very high sugar polymorphism. Post-translationally, can be cleaved by human furin protease; this fragment contributes to self-aggregation and possibly biofilm formation in vitro.

It localises to the secreted. Its subcellular location is the cell wall. The protein resides in the cell surface. In terms of biological role, protein that allows bacteria to adhere to mammalian host cells. Required for full virulence in mouse infection models when infected intranasally. Required for adhesion to host cells in vitro and for persistence in the lower respiratory tract. Binds host keratin 10 (KRT10) on lung cells which mediates adhesion via the C-terminus of the basic region (BR, residues 273-341); glycosylation of either protein is not required for the interaction. A region in the N-terminus (residues 122-166) self aggregates, contributing to mature biofilm formation. The basic region (BR, residues 187-385) also self aggregates; the BR binds DNA which enhances self aggregation. This chain is Pneumococcal serine-rich repeat protein, found in Streptococcus pneumoniae serotype 4 (strain ATCC BAA-334 / TIGR4).